A 545-amino-acid chain; its full sequence is Chaperonin GroEL (545 aa).

Residues 30 to 33, K51, 87 to 91, G415, and D496 contribute to the ATP site; these read TLGP and DGTTT.

Belongs to the chaperonin (HSP60) family. Forms a cylinder of 14 subunits composed of two heptameric rings stacked back-to-back. Interacts with the co-chaperonin GroES.

It localises to the cytoplasm. The enzyme catalyses ATP + H2O + a folded polypeptide = ADP + phosphate + an unfolded polypeptide.. In terms of biological role, together with its co-chaperonin GroES, plays an essential role in assisting protein folding. The GroEL-GroES system forms a nano-cage that allows encapsulation of the non-native substrate proteins and provides a physical environment optimized to promote and accelerate protein folding. This is Chaperonin GroEL from Rhodobacter capsulatus (Rhodopseudomonas capsulata).